A 640-amino-acid polypeptide reads, in one-letter code: Rab proteins geranylgeranyltransferase component A (640 aa).

Disordered stretches follow at residues 414 to 439 and 594 to 640; these read DILG…NNNN and HNEN…EMEL. A compositionally biased stretch (low complexity) spans 419–439; the sequence is NNNNNNNNNNNNNNNNNNNNN. Residues 604-624 are compositionally biased toward acidic residues; sequence IDSDEDEDEDINDMNDNEEED.

It belongs to the Rab GDI family.

Its function is as follows. Substrate-binding subunit (component A) of the Rab geranylgeranyltransferase (GGTase) complex. Binds unprenylated Rab proteins and presents the substrate peptide to the catalytic component B. The component A is thought to be regenerated by transferring its prenylated Rab back to the donor membrane. This is Rab proteins geranylgeranyltransferase component A (MRS6) from Candida albicans (Yeast).